A 308-amino-acid polypeptide reads, in one-letter code: Regulating synaptic membrane exocytosis protein 3 (308 aa).

The interval 86–120 (STETGIAVEMRSRVTRQGSRESTDGSTNSNSSDGT) is disordered. The span at 109 to 120 (DGSTNSNSSDGT) shows a compositional bias: low complexity. The C2 domain occupies 156–274 (PMGDVHIAIM…DLSAAVTGWY (119 aa)). 2 positions are modified to phosphoserine: Ser295 and Ser298.

As to quaternary structure, binds PPFIA3. Does not bind RAB3.

It is found in the synapse. Functionally, regulates synaptic membrane exocytosis. The sequence is that of Regulating synaptic membrane exocytosis protein 3 (RIMS3) from Homo sapiens (Human).